Here is a 224-residue protein sequence, read N- to C-terminus: Voltage-dependent calcium channel gamma-1 subunit (224 aa).

Residues methionine 1–arginine 10 lie on the Cytoplasmic side of the membrane. The chain crosses the membrane as a helical span at residues valine 11–threonine 29. At aspartate 30–alanine 110 the chain is on the extracellular side. Asparagine 43 and asparagine 81 each carry an N-linked (GlcNAc...) asparagine glycan. An intrachain disulfide couples cysteine 57 to cysteine 82. The chain crosses the membrane as a helical span at residues alanine 111–phenylalanine 131. Residues arginine 132–aspartate 136 lie on the Cytoplasmic side of the membrane. A helical membrane pass occupies residues tyrosine 137–valine 157. The Extracellular segment spans residues glutamate 158–glycine 181. The chain crosses the membrane as a helical span at residues tryptophan 182–leucine 206. The Cytoplasmic portion of the chain corresponds to proline 207 to histidine 224.

This sequence belongs to the PMP-22/EMP/MP20 family. CACNG subfamily. In terms of assembly, component of a calcium channel complex consisting of a pore-forming alpha subunit (CACNA1S) and the ancillary subunits CACNB1 or CACNB2, CACNG1 and CACNA2D1. The channel complex contains alpha, beta, gamma and delta subunits in a 1:1:1:1 ratio, i.e. it contains either CACNB1 or CACNB2. In terms of processing, N-glycosylated.

The protein localises to the cell membrane. It localises to the sarcolemma. In terms of biological role, regulatory subunit of the voltage-gated calcium channel that gives rise to L-type calcium currents in skeletal muscle. Regulates channel inactivation kinetics. This is Voltage-dependent calcium channel gamma-1 subunit (CACNG1) from Sus scrofa (Pig).